Consider the following 439-residue polypeptide: NAD-dependent malic enzyme 1 (439 aa).

The 76-residue stretch at 9–84 (TLMIETPSVP…GIRLHTVSDE (76 aa)) folds into the ACT domain. Residue Tyr-112 is the Proton donor of the active site. Residue Lys-167 is the Proton acceptor of the active site. A divalent metal cation-binding residues include Glu-209, Asp-210, and Asp-235. NAD(+) contacts are provided by residues 268–271 (LGAA), Asn-347, and Asn-373.

The protein belongs to the malic enzymes family. It depends on Mg(2+) as a cofactor. The cofactor is Mn(2+).

The catalysed reaction is (S)-malate + NAD(+) = pyruvate + CO2 + NADH. The enzyme catalyses oxaloacetate + H(+) = pyruvate + CO2. Catalyzes the decarboxylation of malate to pyruvate. Is specific for NAD, cannot use NADP. Can also catalyze the decarboxylation of oxaloacetate. Involved in keeping the ATP levels high. In Bacillus subtilis (strain 168), this protein is NAD-dependent malic enzyme 1.